Consider the following 252-residue polypeptide: Undecaprenyl-diphosphatase (252 aa).

The next 7 membrane-spanning stretches (helical) occupy residues 1–21 (MTTL…FLPI), 42–62 (HKAF…FLYF), 74–94 (ILIA…IIKS), 95–115 (LFNP…LILI), 172–192 (AAEF…FYDV), 206–226 (NLIV…KWLL), and 232–252 (HSFI…YLWY).

It belongs to the UppP family.

It is found in the cell inner membrane. It catalyses the reaction di-trans,octa-cis-undecaprenyl diphosphate + H2O = di-trans,octa-cis-undecaprenyl phosphate + phosphate + H(+). Catalyzes the dephosphorylation of undecaprenyl diphosphate (UPP). Confers resistance to bacitracin. This is Undecaprenyl-diphosphatase from Sulfurihydrogenibium sp. (strain YO3AOP1).